The primary structure comprises 447 residues: ATP synthase subunit beta (447 aa).

Residue 147–154 coordinates ATP; the sequence is GGAGVGKT.

It belongs to the ATPase alpha/beta chains family. F-type ATPases have 2 components, CF(1) - the catalytic core - and CF(0) - the membrane proton channel. CF(1) has five subunits: alpha(3), beta(3), gamma(1), delta(1), epsilon(1). CF(0) has three main subunits: a(1), b(2) and c(9-12). The alpha and beta chains form an alternating ring which encloses part of the gamma chain. CF(1) is attached to CF(0) by a central stalk formed by the gamma and epsilon chains, while a peripheral stalk is formed by the delta and b chains.

It localises to the cell membrane. The enzyme catalyses ATP + H2O + 4 H(+)(in) = ADP + phosphate + 5 H(+)(out). Its function is as follows. Produces ATP from ADP in the presence of a proton gradient across the membrane. The catalytic sites are hosted primarily by the beta subunits. The protein is ATP synthase subunit beta of Carsonella ruddii (strain PV).